A 499-amino-acid polypeptide reads, in one-letter code: Beta-amylase (499 aa).

Substrate contacts are provided by Asp-55, His-95, and Asp-103. The Proton donor role is filled by Glu-188. Substrate contacts are provided by Lys-298, His-303, and Thr-345. Glu-383 serves as the catalytic Proton acceptor. Substrate-binding positions include Asn-384–Ala-385 and Arg-423.

It belongs to the glycosyl hydrolase 14 family. In terms of assembly, homotetramer.

The enzyme catalyses Hydrolysis of (1-&gt;4)-alpha-D-glucosidic linkages in polysaccharides so as to remove successive maltose units from the non-reducing ends of the chains.. The polypeptide is Beta-amylase (BMY1) (Ipomoea batatas (Sweet potato)).